A 346-amino-acid chain; its full sequence is STE20-related kinase adapter protein stlk (346 aa).

One can recognise a Protein kinase domain in the interval 10-298; it reads YKLLEILKNG…ASKLMTHSFL (289 aa). ATP-binding positions include 16-24 and lysine 38; that span reads LKNGMIGTV.

It belongs to the protein kinase superfamily. STE Ser/Thr protein kinase family. STE20 subfamily.

This chain is STE20-related kinase adapter protein stlk, found in Drosophila melanogaster (Fruit fly).